The following is a 330-amino-acid chain: Aspartate--ammonia ligase (330 aa).

Belongs to the class-II aminoacyl-tRNA synthetase family. AsnA subfamily.

The protein resides in the cytoplasm. It carries out the reaction L-aspartate + NH4(+) + ATP = L-asparagine + AMP + diphosphate + H(+). It participates in amino-acid biosynthesis; L-asparagine biosynthesis; L-asparagine from L-aspartate (ammonia route): step 1/1. The polypeptide is Aspartate--ammonia ligase (Haemophilus influenzae (strain ATCC 51907 / DSM 11121 / KW20 / Rd)).